The primary structure comprises 238 residues: TATA-box-binding protein (238 aa).

The interval 1–58 (MDLKLPPTNPTNPQQAKTFMKSIEEDEKNKAEDLDIIKKEDIDEPKQEDTTDGNGGGG) is disordered. Basic and acidic residues predominate over residues 27–49 (EKNKAEDLDIIKKEDIDEPKQED). A run of 2 repeats spans residues 65–141 (LQNI…ARII) and 155–232 (IQNI…YPVL).

Belongs to the TBP family. In terms of assembly, belongs to the TFIID complex together with the TBP-associated factors (TAFs). Binds DNA as monomer.

The protein localises to the nucleus. Functionally, general transcription factor that functions at the core of the DNA-binding multiprotein factor TFIID. Binding of TFIID to the TATA box is the initial transcriptional step of the pre-initiation complex (PIC), playing a role in the activation of eukaryotic genes transcribed by RNA polymerase II. This chain is TATA-box-binding protein (TBP1), found in Candida albicans (strain SC5314 / ATCC MYA-2876) (Yeast).